A 497-amino-acid chain; its full sequence is Probable pyruvate kinase, cytosolic isozyme (497 aa).

Residue Arg37 coordinates substrate. 4 residues coordinate K(+): Asn39, Ser41, Asp71, and Thr72. 39-42 (NFSH) lines the ATP pocket. ATP-binding residues include Arg78 and Lys163. Residue Lys227 coordinates substrate. Glu229 contacts Mg(2+). 3 residues coordinate substrate: Gly252, Asp253, and Thr285. A Mg(2+)-binding site is contributed by Asp253.

It belongs to the pyruvate kinase family. Homotetramer. Mg(2+) is required as a cofactor. Requires K(+) as cofactor.

Its subcellular location is the cytoplasm. It localises to the cytosol. It carries out the reaction pyruvate + ATP = phosphoenolpyruvate + ADP + H(+). It participates in carbohydrate degradation; glycolysis; pyruvate from D-glyceraldehyde 3-phosphate: step 5/5. Its function is as follows. Key regulatory enzyme of the glycolytic pathway that catalyzes the final step of glycolysis, converting ADP and phosphoenolpyruvate (PEP) to ATP and pyruvate by essentially irreversible transphosphorylation. The sequence is that of Probable pyruvate kinase, cytosolic isozyme from Arabidopsis thaliana (Mouse-ear cress).